Here is a 171-residue protein sequence, read N- to C-terminus: MKVFLGLLLGYSTILILTYQSPTTQHPPKEELEYWCTYAKTCDFCWDCQNDTCINKVINESISMNSIVNCRVTRDSQSQSCFYEISLKIPNYHSMECSYPRLYKHFMSMEKWRDENWPILIRHYCFYLVFSFAFAGCVAFAICKNLRLRTTMKLLMLLSILVLLSQPILNN.

3 helical membrane passes run 2 to 20 (KVFLGLLLGYSTILILTYQ), 123 to 143 (HYCFYLVFSFAFAGCVAFAIC), and 150 to 170 (TTMKLLMLLSILVLLSQPILN).

This sequence belongs to the asfivirus MGF 110 family.

The protein resides in the host membrane. Functionally, plays a role in virus cell tropism, and may be required for efficient virus replication in macrophages. The chain is Protein MGF 110-12L from African swine fever virus (isolate Tick/Malawi/Lil 20-1/1983) (ASFV).